We begin with the raw amino-acid sequence, 590 residues long: tRNA-guanine(15) transglycosylase (590 aa).

Residue D90 is the Nucleophile of the active site. Residue D125 coordinates substrate. Zn(2+) is bound by residues C278, C280, and C283. One can recognise a PUA domain in the interval 502-577 (KGRVVVKGLF…HPFIIIRRHV (76 aa)).

It belongs to the archaeosine tRNA-ribosyltransferase family. The cofactor is Zn(2+).

It catalyses the reaction guanosine(15) in tRNA + 7-cyano-7-deazaguanine = 7-cyano-7-carbaguanosine(15) in tRNA + guanine. It participates in tRNA modification; archaeosine-tRNA biosynthesis. Functionally, exchanges the guanine residue with 7-cyano-7-deazaguanine (preQ0) at position 15 in the dihydrouridine loop (D-loop) of archaeal tRNAs. The polypeptide is tRNA-guanine(15) transglycosylase (Korarchaeum cryptofilum (strain OPF8)).